A 180-amino-acid chain; its full sequence is ADP-ribosylation factor 5 (180 aa).

A lipid anchor (N-myristoyl glycine) is attached at glycine 2. GTP contacts are provided by residues 24 to 31, 67 to 71, and 126 to 129; these read GLDAAGKT, DVGGQ, and NKQD.

Belongs to the small GTPase superfamily. Arf family. In terms of assembly, interacts (when activated) with GGA1, GGA2 and GGA3; the interaction is required for proper subcellular location of GGA1, GGA2 and GGA3. Binds ASAP2. Interacts with NCS1/FREQ at the Golgi complex. Interacts with RAB11FIP3 and RAB11FIP4.

The protein localises to the golgi apparatus. The protein resides in the cytoplasm. Its subcellular location is the perinuclear region. It localises to the membrane. It is found in the trans-Golgi network membrane. GTP-binding protein involved in protein trafficking; may modulate vesicle budding and uncoating within the Golgi apparatus. In terms of biological role, (Microbial infection) Functions as an allosteric activator of the cholera toxin catalytic subunit, an ADP-ribosyltransferase. This Homo sapiens (Human) protein is ADP-ribosylation factor 5 (ARF5).